Here is a 124-residue protein sequence, read N- to C-terminus: Small ribosomal subunit protein uS12c (124 aa).

Belongs to the universal ribosomal protein uS12 family. As to quaternary structure, part of the 30S ribosomal subunit.

The protein resides in the plastid. It localises to the chloroplast. In terms of biological role, with S4 and S5 plays an important role in translational accuracy. Located at the interface of the 30S and 50S subunits. This Ostreococcus tauri protein is Small ribosomal subunit protein uS12c (rps12).